The following is a 124-amino-acid chain: Small ribosomal subunit protein uS12 (124 aa).

Positions 1–32 (MPTIQQLVRKGREDKVVKTKTPALKGSPQRRG) are disordered. A 3-methylthioaspartic acid modification is found at Asp-89. Residues 105–124 (QGVKNRKQARSRYGAKKEKS) form a disordered region. Over residues 108 to 118 (KNRKQARSRYG) the composition is skewed to basic residues.

This sequence belongs to the universal ribosomal protein uS12 family. Part of the 30S ribosomal subunit. Contacts proteins S8 and S17. May interact with IF1 in the 30S initiation complex.

Functionally, with S4 and S5 plays an important role in translational accuracy. Interacts with and stabilizes bases of the 16S rRNA that are involved in tRNA selection in the A site and with the mRNA backbone. Located at the interface of the 30S and 50S subunits, it traverses the body of the 30S subunit contacting proteins on the other side and probably holding the rRNA structure together. The combined cluster of proteins S8, S12 and S17 appears to hold together the shoulder and platform of the 30S subunit. This Kineococcus radiotolerans (strain ATCC BAA-149 / DSM 14245 / SRS30216) protein is Small ribosomal subunit protein uS12.